A 515-amino-acid chain; its full sequence is Glucose-6-phosphate 1-dehydrogenase (515 aa).

Ala-2 is modified (N-acetylalanine). Ser-8 is modified (phosphoserine). The residue at position 10 (Thr-10) is a Phosphothreonine. NADP(+)-binding positions include 38–45 and Arg-72; that span reads GASGDLAK. Lys-89 is modified (N6-acetyllysine). 2 residues coordinate NADP(+): Tyr-147 and Lys-171. Residues Lys-171, 201-205, Glu-239, and Asp-258 each bind D-glucose 6-phosphate; that span reads HYLGK. Residue Lys-171 is modified to N6-(2-hydroxyisobutyryl)lysine; alternate. Lys-171 bears the N6-acetyllysine; alternate mark. The active-site Proton acceptor is the His-263. Arg-357 is a binding site for NADP(+). Residues Lys-360 and Arg-365 each coordinate D-glucose 6-phosphate. Lys-366, Arg-370, and Arg-393 together coordinate NADP(+). Gln-395 lines the D-glucose 6-phosphate pocket. Residues 401 to 403 and 421 to 423 contribute to the NADP(+) site; these read YTK and DLT. Residue Lys-403 is modified to N6-acetyllysine. Residue Lys-432 is modified to N6-acetyllysine. Arg-487 provides a ligand contact to NADP(+). Lys-497 is subject to N6-acetyllysine. Tyr-503 and Trp-509 together coordinate NADP(+). Residue Tyr-503 is modified to Phosphotyrosine.

The protein belongs to the glucose-6-phosphate dehydrogenase family. In terms of assembly, homotetramer; dimer of dimers. Interacts with SIRT2; the interaction is enhanced by H(2)O(2) treatment. Forms a ternary complex with ALDOB and TP53; this interaction is direct. ALDOB stabilizes the complex inhibiting G6PD activity and keeping oxidative pentose phosphate metabolism in check. Post-translationally, acetylated by ELP3 at Lys-403; acetylation inhibits its homodimerization and enzyme activity. Deacetylated by SIRT2 at Lys-403; deacetylation stimulates its enzyme activity.

Its subcellular location is the cytoplasm. It localises to the cytosol. The protein localises to the membrane. The enzyme catalyses D-glucose 6-phosphate + NADP(+) = 6-phospho-D-glucono-1,5-lactone + NADPH + H(+). It participates in carbohydrate degradation; pentose phosphate pathway; D-ribulose 5-phosphate from D-glucose 6-phosphate (oxidative stage): step 1/3. In terms of biological role, cytosolic glucose-6-phosphate dehydrogenase that catalyzes the first and rate-limiting step of the oxidative branch within the pentose phosphate pathway/shunt, an alternative route to glycolysis for the dissimilation of carbohydrates and a major source of reducing power and metabolic intermediates for fatty acid and nucleic acid biosynthetic processes. The chain is Glucose-6-phosphate 1-dehydrogenase (G6PD) from Osphranter robustus (Wallaroo).